The following is a 167-amino-acid chain: Early nodulin-like protein 16 (167 aa).

A signal peptide spans 1–24 (MARVAVLVAGAVLAFLLAATNVTA). Residues 25–126 (KRWTVGDNKF…GMKLAVLVEK (102 aa)) form the Phytocyanin domain. Residues Asn40, Asn71, Asn86, and Asn99 are each glycosylated (N-linked (GlcNAc...) asparagine). A disulfide bond links Cys78 and Cys114. A lipid anchor (GPI-anchor amidated asparagine) is attached at Asn138. A propeptide spans 139–167 (SARRTFSVSGFAYQFLIPVAVFAAVGTRY) (removed in mature form).

The protein belongs to the early nodulin-like (ENODL) family.

The protein localises to the cell membrane. In terms of biological role, may act as a carbohydrate transporter. The polypeptide is Early nodulin-like protein 16 (Arabidopsis thaliana (Mouse-ear cress)).